Consider the following 69-residue polypeptide: Amphipathic peptide StCT2 (69 aa).

A signal peptide spans 1–23 (MKTQFAVLIISMILMQMLVQTEA). At Ile-37 the chain carries Isoleucine amide. The propeptide occupies 41–69 (SLRNQDQFDNMFDSDLSDADLKLLDDLFD).

It belongs to the non-disulfide-bridged peptide (NDBP) superfamily. Short antimicrobial peptide (group 4) family. Expressed by the venom gland.

The protein resides in the secreted. Its subcellular location is the target cell membrane. Antimicrobial peptide that is rapidly bactericidal against Gram-positive bacteria. In Scorpiops tibetanus (Scorpion), this protein is Amphipathic peptide StCT2.